A 110-amino-acid chain; its full sequence is Cytochrome c6 (110 aa).

The N-terminal stretch at 1–25 (MKKLVSSVILALILFGFSWVSPAFA) is a signal peptide. Positions 39, 42, 43, and 83 each coordinate heme c.

Belongs to the cytochrome c family. PetJ subfamily. In terms of assembly, monomer. Binds 1 heme c group covalently per subunit.

It is found in the cellular thylakoid lumen. Functions as an electron carrier between membrane-bound cytochrome b6-f and photosystem I in oxygenic photosynthesis. The polypeptide is Cytochrome c6 (Gloeothece citriformis (strain PCC 7424) (Cyanothece sp. (strain PCC 7424))).